Consider the following 97-residue polypeptide: MHGKKPSVQDIVLDLKPTTETDLTCYESLDNSEDEDETDSHLERQAEQAWYRIVTDCSRCQSTVCLTIESTHADLLVLEDLLMGALKIVCPNCSRRL.

Positions 1-44 (MHGKKPSVQDIVLDLKPTTETDLTCYESLDNSEDEDETDSHLER) are E7 terminal domain. An LXCXE motif; interaction with host RB1 and TMEM173/STING motif is present at residues 23 to 27 (LTCYE). The segment at 57-93 (CSRCQSTVCLTIESTHADLLVLEDLLMGALKIVCPNC) is a zinc-finger region. The short motif at 75–83 (LLVLEDLLM) is the Nuclear export signal element.

This sequence belongs to the papillomaviridae E7 protein family. As to quaternary structure, homodimer. Homooligomer. Interacts with host RB1; this interaction induces dissociation of RB1-E2F1 complex thereby disrupting RB1 activity. Interacts with host EP300; this interaction represses EP300 transcriptional activity. Interacts with protein E2; this interaction inhibits E7 oncogenic activity. Interacts with host TMEM173/STING; this interaction impairs the ability of TMEM173/STING to sense cytosolic DNA and promote the production of type I interferon (IFN-alpha and IFN-beta). Post-translationally, highly phosphorylated.

It localises to the host cytoplasm. It is found in the host nucleus. Its function is as follows. Plays a role in viral genome replication by driving entry of quiescent cells into the cell cycle. Stimulation of progression from G1 to S phase allows the virus to efficiently use the cellular DNA replicating machinery to achieve viral genome replication. E7 protein has both transforming and trans-activating activities. Induces the disassembly of the E2F1 transcription factor from RB1, with subsequent transcriptional activation of E2F1-regulated S-phase genes. Interferes with host histone deacetylation mediated by HDAC1 and HDAC2, leading to transcription activation. Also plays a role in the inhibition of both antiviral and antiproliferative functions of host interferon alpha. Interaction with host TMEM173/STING impairs the ability of TMEM173/STING to sense cytosolic DNA and promote the production of type I interferon (IFN-alpha and IFN-beta). The sequence is that of Protein E7 from Human papillomavirus type 34.